The primary structure comprises 277 residues: Energy-coupling factor transporter ATP-binding protein EcfA1 (277 aa).

The 236-residue stretch at 5–240 folds into the ABC transporter domain; the sequence is LEVENLVFKY…SEDMVEIGLD (236 aa). Position 40-47 (40-47) interacts with ATP; the sequence is GQNGSGKS.

Belongs to the ABC transporter superfamily. Energy-coupling factor EcfA family. In terms of assembly, forms a stable energy-coupling factor (ECF) transporter complex composed of 2 membrane-embedded substrate-binding proteins (S component), 2 ATP-binding proteins (A component) and 2 transmembrane proteins (T component).

The protein localises to the cell membrane. Its function is as follows. ATP-binding (A) component of a common energy-coupling factor (ECF) ABC-transporter complex. Unlike classic ABC transporters this ECF transporter provides the energy necessary to transport a number of different substrates. This is Energy-coupling factor transporter ATP-binding protein EcfA1 from Lactococcus lactis subsp. lactis (strain IL1403) (Streptococcus lactis).